Here is a 995-residue protein sequence, read N- to C-terminus: S1 RNA-binding domain-containing protein 1 (995 aa).

The tract at residues serine 23 to serine 78 is disordered. Lysine 84 is covalently cross-linked (Glycyl lysine isopeptide (Lys-Gly) (interchain with G-Cter in SUMO2)). Over residues threonine 116 to lysine 132 the composition is skewed to basic residues. The tract at residues threonine 116–threonine 164 is disordered. Lysine 134 participates in a covalent cross-link: Glycyl lysine isopeptide (Lys-Gly) (interchain with G-Cter in SUMO2). Residues glutamate 146 to threonine 159 show a composition bias toward low complexity. Residues lysine 166, lysine 167, and lysine 183 each participate in a glycyl lysine isopeptide (Lys-Gly) (interchain with G-Cter in SUMO2) cross-link. Residue lysine 185 forms a Glycyl lysine isopeptide (Lys-Gly) (interchain with G-Cter in SUMO1); alternate linkage. Lysine 185 is covalently cross-linked (Glycyl lysine isopeptide (Lys-Gly) (interchain with G-Cter in SUMO2); alternate). Residues alanine 258–glutamate 288 adopt a coiled-coil conformation. Serine 861 carries the post-translational modification Phosphoserine. One can recognise an S1 motif domain in the interval glycine 919–isoleucine 992. Lysine 955 is covalently cross-linked (Glycyl lysine isopeptide (Lys-Gly) (interchain with G-Cter in SUMO2)). Serine 964 is modified (phosphoserine).

In Pongo abelii (Sumatran orangutan), this protein is S1 RNA-binding domain-containing protein 1 (SRBD1).